A 252-amino-acid polypeptide reads, in one-letter code: 3-deoxy-manno-octulosonate cytidylyltransferase (252 aa).

The protein belongs to the KdsB family.

The protein localises to the cytoplasm. The catalysed reaction is 3-deoxy-alpha-D-manno-oct-2-ulosonate + CTP = CMP-3-deoxy-beta-D-manno-octulosonate + diphosphate. It participates in nucleotide-sugar biosynthesis; CMP-3-deoxy-D-manno-octulosonate biosynthesis; CMP-3-deoxy-D-manno-octulosonate from 3-deoxy-D-manno-octulosonate and CTP: step 1/1. It functions in the pathway bacterial outer membrane biogenesis; lipopolysaccharide biosynthesis. In terms of biological role, activates KDO (a required 8-carbon sugar) for incorporation into bacterial lipopolysaccharide in Gram-negative bacteria. This chain is 3-deoxy-manno-octulosonate cytidylyltransferase, found in Vibrio cholerae serotype O1 (strain ATCC 39315 / El Tor Inaba N16961).